The primary structure comprises 620 residues: Mitochondrial Rho GTPase 2 (620 aa).

Topologically, residues M1–R594 are cytoplasmic. In terms of domain architecture, Miro 1 spans R2 to H168. G16, K17, T18, and S19 together coordinate GTP. T18 provides a ligand contact to Mg(2+). D57 lines the Mg(2+) pocket. Position 59 (S59) interacts with GTP. K96 is covalently cross-linked (Glycyl lysine isopeptide (Lys-Gly) (interchain with G-Cter in ubiquitin)). GTP contacts are provided by N118, K119, D121, A149, and K150. A Glycyl lysine isopeptide (Lys-Gly) (interchain with G-Cter in ubiquitin) cross-link involves residue K119. A Glycyl lysine isopeptide (Lys-Gly) (interchain with G-Cter in ubiquitin) cross-link involves residue K164. EF-hand domains lie at A184–H219 and R304–A339. Residues D197, D199, D201, E208, D317, D319, D321, and E328 each contribute to the Ca(2+) site. Residues R415 to F578 enclose the Miro 2 domain. GTP is bound by residues G427, G429, K430, S431, and A432. S431 provides a ligand contact to Mg(2+). E473 is a Mg(2+) binding site. The GTP site is built by K527, D529, and C558. A helical; Anchor for type IV membrane protein transmembrane segment spans residues G595–V617. Topologically, residues K618–R620 are mitochondrial intermembrane.

It belongs to the mitochondrial Rho GTPase family. As to quaternary structure, homodimer. Interacts with the kinesin-binding proteins TRAK1/OIP106 and TRAK2/GRIF1, forming a link between mitochondria and the trafficking apparatus of the microtubules. Interacts with ARMCX3. Found in a complex with KIF5B, OGT, RHOT1 and TRAK1. In terms of processing, ubiquitinated by PRKN in a PINK1-dependent manner, leading to its degradation. In terms of tissue distribution, ubiquitously expressed.

It localises to the mitochondrion outer membrane. It carries out the reaction GTP + H2O = GDP + phosphate + H(+). It catalyses the reaction ATP + H2O = ADP + phosphate + H(+). The enzyme catalyses UTP + H2O = UDP + phosphate + H(+). Functionally, atypical mitochondrial nucleoside-triphosphatase (NTPase) involved in mitochondrial trafficking. Probably involved in control of anterograde transport of mitochondria and their subcellular distribution. Can hydrolyze GTP, ATP and UTP. The sequence is that of Mitochondrial Rho GTPase 2 (Rhot2) from Mus musculus (Mouse).